The primary structure comprises 416 residues: Formyl-CoA:oxalate CoA-transferase (416 aa).

Residues 17–18, R38, 72–75, 96–98, H104, and 137–140 each bind CoA; these read QS, LNTK, NFH, and KAYE. D169 serves as the catalytic Nucleophile. 248 to 250 provides a ligand contact to substrate; that stretch reads GGQ. 273 to 275 lines the CoA pocket; it reads QEQ.

Belongs to the CoA-transferase III family. Frc subfamily. In terms of assembly, homodimer.

The catalysed reaction is formyl-CoA + oxalate = oxalyl-CoA + formate. The protein operates within metabolic intermediate degradation; oxalate degradation; CO(2) and formate from oxalate: step 1/2. Its function is as follows. Involved in the catabolism of oxalate and in the adapatation to low pH via the induction of the oxalate-dependent acid tolerance response (ATR). Catalyzes the transfer of the CoA moiety from formyl-CoA to oxalate. In Shigella sonnei (strain Ss046), this protein is Formyl-CoA:oxalate CoA-transferase.